The primary structure comprises 122 residues: Copper metallothionein 1 (122 aa).

A cys-rich copper-binding 1 region spans residues 1-35 (MACNCPPQKNTACCSTSEAQDKCTCQKGNCECKAC). Residues 36–50 (PNSTKTSESGGKAST) are spacer B1. The interval 51-72 (CNCGGSGEACTCPPGQCACDKC) is cys-rich copper-binding 2. Positions 73 to 81 (PKKAKSVST) are spacer B2. The segment at 82–103 (CGCGGSGAACSCPPGKCACDNC) is cys-rich copper-binding 3. The interval 104-113 (PKQAQEKVSS) is spacer B3. Residues 114-122 (CACSGSGAA) are cys-rich copper-binding 4.

This sequence belongs to the metallothionein superfamily.

Its subcellular location is the cytoplasm. It localises to the cell cortex. Its function is as follows. Copper metallothionein that protects the cell against copper toxicity by tightly chelating copper ions. Required for antioxidant-mediated growth rescue in the presence of fluconazole. Acts as a critical factors for lung colonization and virulence. The sequence is that of Copper metallothionein 1 from Cryptococcus neoformans var. grubii serotype A (strain H99 / ATCC 208821 / CBS 10515 / FGSC 9487) (Filobasidiella neoformans var. grubii).